The following is a 286-amino-acid chain: MAAPNDPELTRRRQRQEDFLRGTSKINFDDHVDHHVLSGKTAIITGGASGLGLGIAKALSDNGCRVAVLDLSECAEAGTDESNIESPKLFKCDVSSWESLLAAFQEVMLWSADRLDIVVLSAGVRSHNIKDLILKRAVGSASTPVKPPSSVFDVNLLGTYYSAYLALWYFTNLESKSDGLESSSWRPQLLFIGSLASYIEQPLSADYCASKHGVRGLWKSVRSHSASFGGCQTNLLAPTFIDNRQGSTKSRGDGALISLTTDVKLGEVADVVAGALRCICDNNIEG.

7 residues coordinate NADP(+): S49, L51, D93, Y207, K211, I241, and Q245. Catalysis depends on Y207, which acts as the Proton acceptor. The active-site Proton donor is Y207. K211 acts as the Lowers pKa of active site Tyr in catalysis.

Belongs to the short-chain dehydrogenases/reductases (SDR) family. Homodimer.

Its subcellular location is the cytoplasm. The protein resides in the cytosol. The protein operates within secondary metabolite biosynthesis. Functionally, NADP-dependent dehydrogenase; part of the gene cluster that mediates the biosynthesis of squalestatin S1 (SQS1, also known as zaragozic acid A), a heavily oxidized fungal polyketide that offers potent cholesterol lowering activity by targeting squalene synthase (SS). SQS1 is composed of a 2,8-dioxobicyclic[3.2.1]octane-3,4,5-tricarboxyclic acid core that is connected to two lipophilic polyketide arms. These initial steps feature the priming of an unusual benzoic acid starter unit onto the highly reducing polyketide synthase clz14, followed by oxaloacetate extension and product release to generate a tricarboxylic acid containing product. The phenylalanine ammonia lyase (PAL) clz10 and the acyl-CoA ligase clz12 are involved in transforming phenylalanine into benzoyl-CoA. The citrate synthase-like protein clz17 is involved in connecting the C-alpha-carbons of the hexaketide chain and oxaloacetate to afford the tricarboxylic acid unit. The potential hydrolytic enzymes, clz11 and clz13, are in close proximity to pks2 and may participate in product release. On the other side, the tetraketide arm is synthesized by a the squalestatin tetraketide synthase clz2 and enzymatically esterified to the core in the last biosynthetic step, by the acetyltransferase clz6. The biosynthesis of the tetraketide must involve 3 rounds of chain extension. After the first and second rounds methyl-transfer occurs, and in all rounds of extension the ketoreductase and dehydratase are active. The enoyl reductase and C-MeT of clz2 are not active in the final round of extension. The acetyltransferase clz6 appears to have a broad substrate selectivity for its acyl CoA substrate, allowing the in vitro synthesis of novel squalestatins. The biosynthesis of SQS1 requires several oxidative steps likely performed by oxidoreductases clz3, clz15 and clz16. Finally, in support of the identification of the cluster as being responsible for SQS1 production, the cluster contains a gene encoding a putative squalene synthase (SS) clz20, suggesting a likely mechanism for self-resistance. In Cochliobolus lunatus (Filamentous fungus), this protein is NADP-dependent dehydrogenase clz5.